Consider the following 92-residue polypeptide: PqqA binding protein (92 aa).

The protein belongs to the PqqD family. In terms of assembly, monomer. Interacts with PqqE.

It participates in cofactor biosynthesis; pyrroloquinoline quinone biosynthesis. Its function is as follows. Functions as a PqqA binding protein and presents PqqA to PqqE, in the pyrroloquinoline quinone (PQQ) biosynthetic pathway. The sequence is that of PqqA binding protein from Xanthomonas euvesicatoria pv. vesicatoria (strain 85-10) (Xanthomonas campestris pv. vesicatoria).